The primary structure comprises 326 residues: Sucrose operon repressor (326 aa).

In terms of domain architecture, HTH lacI-type spans 1–57 (MKPKLNDVAKLAGVSATTVSRVINNHGYLSSQTKEKVFAAMRELHYQPNNMARSLQG). Positions 5 to 24 (LNDVAKLAGVSATTVSRVIN) form a DNA-binding region, H-T-H motif.

Negative regulator of scrB expression. This is Sucrose operon repressor (scrR) from Pediococcus pentosaceus.